Consider the following 362-residue polypeptide: Dual-specificity RNA methyltransferase RlmN (362 aa).

Glutamate 100 (proton acceptor) is an active-site residue. Positions 106–345 (EPDRNTLCIS…VFIRNSRGED (240 aa)) constitute a Radical SAM core domain. An intrachain disulfide couples cysteine 113 to cysteine 350. Cysteine 120, cysteine 124, and cysteine 127 together coordinate [4Fe-4S] cluster. S-adenosyl-L-methionine-binding positions include 177–178 (GE), serine 209, 231–233 (SLH), and asparagine 307. Cysteine 350 serves as the catalytic S-methylcysteine intermediate.

The protein belongs to the radical SAM superfamily. RlmN family. The cofactor is [4Fe-4S] cluster.

Its subcellular location is the cytoplasm. The catalysed reaction is adenosine(2503) in 23S rRNA + 2 reduced [2Fe-2S]-[ferredoxin] + 2 S-adenosyl-L-methionine = 2-methyladenosine(2503) in 23S rRNA + 5'-deoxyadenosine + L-methionine + 2 oxidized [2Fe-2S]-[ferredoxin] + S-adenosyl-L-homocysteine. It catalyses the reaction adenosine(37) in tRNA + 2 reduced [2Fe-2S]-[ferredoxin] + 2 S-adenosyl-L-methionine = 2-methyladenosine(37) in tRNA + 5'-deoxyadenosine + L-methionine + 2 oxidized [2Fe-2S]-[ferredoxin] + S-adenosyl-L-homocysteine. In terms of biological role, specifically methylates position 2 of adenine 2503 in 23S rRNA and position 2 of adenine 37 in tRNAs. m2A2503 modification seems to play a crucial role in the proofreading step occurring at the peptidyl transferase center and thus would serve to optimize ribosomal fidelity. The sequence is that of Dual-specificity RNA methyltransferase RlmN from Desulfotalea psychrophila (strain LSv54 / DSM 12343).